A 368-amino-acid chain; its full sequence is Epoxyqueuosine reductase QueH (368 aa).

C6, C7, C87, and C90 together coordinate [4Fe-4S] cluster. An intrachain disulfide couples C174 to C176.

It belongs to the QueH family.

The catalysed reaction is epoxyqueuosine(34) in tRNA + AH2 = queuosine(34) in tRNA + A + H2O. The protein operates within tRNA modification; tRNA-queuosine biosynthesis. In terms of biological role, catalyzes the conversion of epoxyqueuosine (oQ) to queuosine (Q), which is a hypermodified base found in the wobble positions of tRNA(Asp), tRNA(Asn), tRNA(His) and tRNA(Tyr). This is Epoxyqueuosine reductase QueH from Helicobacter pylori (strain ATCC 700392 / 26695) (Campylobacter pylori).